The chain runs to 260 residues: 3'-5' ssDNA/RNA exonuclease TatD (260 aa).

Positions 91, 127, and 152 each coordinate a divalent metal cation.

This sequence belongs to the metallo-dependent hydrolases superfamily. TatD-type hydrolase family. TatD subfamily. As to quaternary structure, monomer. Mg(2+) serves as cofactor.

Its subcellular location is the cytoplasm. 3'-5' exonuclease that prefers single-stranded DNA and RNA. May play a role in the H(2)O(2)-induced DNA damage repair. This is 3'-5' ssDNA/RNA exonuclease TatD from Enterobacter lignolyticus (strain SCF1).